Consider the following 391-residue polypeptide: Probable sugar efflux transporter (391 aa).

The next 12 membrane-spanning stretches (helical) occupy residues 16–36 (VFVF…PVAL), 51–71 (VGLM…PLML), 82–102 (LLFL…AWNF), 103–123 (WVLL…WSIT), 138–158 (QALG…LPLG), 170–190 (TFGV…KLLP), 210–230 (PLLV…FTTY), 247–267 (ITTL…FLFG), 277–297 (FIAF…VFKN), 300–320 (WVIF…TIAL), 338–358 (IFSG…SIVI), and 361–381 (LGLE…LFWL).

This sequence belongs to the major facilitator superfamily. SotB (TC 2.A.1.2) family.

The protein localises to the cell inner membrane. Its function is as follows. Involved in the efflux of sugars. The physiological role may be the reduction of the intracellular concentration of toxic sugars or sugar metabolites. The polypeptide is Probable sugar efflux transporter (Helicobacter pylori (strain P12)).